The following is a 93-amino-acid chain: MASEMIVDHRQKAFELLKVDAEKILKLIRVQMDNLTMPQCPLYEEVLDTQMFGLSREIDFAVRLGLVDEKDGKDLLYTLERELSALHDAFTAK.

The protein belongs to the UPF0358 family.

Functionally, essential for cell growth and for normal cell shape. The sequence is that of UPF0358 protein YlaN (ylaN) from Bacillus subtilis (strain 168).